Reading from the N-terminus, the 437-residue chain is Serine hydroxymethyltransferase 2 (437 aa).

(6S)-5,6,7,8-tetrahydrofolate-binding positions include leucine 125 and 129–131; that span reads GHL. Lysine 234 carries the post-translational modification N6-(pyridoxal phosphate)lysine.

This sequence belongs to the SHMT family. In terms of assembly, homodimer. Pyridoxal 5'-phosphate serves as cofactor.

The protein resides in the cytoplasm. It carries out the reaction (6R)-5,10-methylene-5,6,7,8-tetrahydrofolate + glycine + H2O = (6S)-5,6,7,8-tetrahydrofolate + L-serine. The protein operates within one-carbon metabolism; tetrahydrofolate interconversion. It functions in the pathway amino-acid biosynthesis; glycine biosynthesis; glycine from L-serine: step 1/1. In terms of biological role, catalyzes the reversible interconversion of serine and glycine with tetrahydrofolate (THF) serving as the one-carbon carrier. This reaction serves as the major source of one-carbon groups required for the biosynthesis of purines, thymidylate, methionine, and other important biomolecules. Also exhibits THF-independent aldolase activity toward beta-hydroxyamino acids, producing glycine and aldehydes, via a retro-aldol mechanism. This Mesorhizobium japonicum (strain LMG 29417 / CECT 9101 / MAFF 303099) (Mesorhizobium loti (strain MAFF 303099)) protein is Serine hydroxymethyltransferase 2.